The following is a 634-amino-acid chain: Carbon monoxide dehydrogenase 2 (634 aa).

[4Fe-4S] cluster contacts are provided by cysteine 44, cysteine 53, cysteine 56, cysteine 61, and cysteine 73. [Ni-4Fe-5S] cluster contacts are provided by histidine 264, cysteine 343, cysteine 453, cysteine 484, and cysteine 525.

The protein belongs to the Ni-containing carbon monoxide dehydrogenase family. Homodimer. It depends on [4Fe-4S] cluster as a cofactor. [Ni-4Fe-5S] cluster serves as cofactor.

It catalyses the reaction CO + 2 oxidized [2Fe-2S]-[ferredoxin] + H2O = 2 reduced [2Fe-2S]-[ferredoxin] + CO2 + 2 H(+). Functionally, CODH oxidizes carbon monoxide coupled, via CooF, to the reduction of a hydrogen cation by a hydrogenase (possibly CooH). This Methanosarcina mazei (strain ATCC BAA-159 / DSM 3647 / Goe1 / Go1 / JCM 11833 / OCM 88) (Methanosarcina frisia) protein is Carbon monoxide dehydrogenase 2 (cooS2).